Reading from the N-terminus, the 108-residue chain is U-scoloptoxin(16)-Er10a (108 aa).

A signal peptide spans 1–24; it reads MASFTSFCVLFTFCLLLLAHQARS.

Belongs to the scoloptoxin-16 family. Contains 4 disulfide bonds. In terms of tissue distribution, expressed by the venom gland.

It is found in the secreted. The chain is U-scoloptoxin(16)-Er10a from Ethmostigmus rubripes (Giant centipede).